Consider the following 124-residue polypeptide: Small ribosomal subunit protein bS16 (124 aa).

The segment at 82-124 (LAKRPARSNPTKAVPGKKAQERAAEAKQKAEDAAAAAAESAAE) is disordered. Over residues 99 to 113 (KAQERAAEAKQKAED) the composition is skewed to basic and acidic residues. The span at 114-124 (AAAAAAESAAE) shows a compositional bias: low complexity.

The protein belongs to the bacterial ribosomal protein bS16 family.

This Sinorhizobium fredii (strain NBRC 101917 / NGR234) protein is Small ribosomal subunit protein bS16.